The chain runs to 269 residues: BAG family molecular chaperone regulator 4 (269 aa).

The tract at residues 1-40 (MMHNSTEESEWEVRPGGMLVQRRDDAASSDHKPLQDPDSA) is disordered. Positions 21 to 35 (QRRDDAASSDHKPLQ) are enriched in basic and acidic residues. Residues 46-122 (QTIRITVSHG…LVVVVEDTNK (77 aa)) form the Ubiquitin-like domain. A BAG domain is found at 138-219 (AIAAVNAVTG…NLQEAVDKLK (82 aa)). Positions 241 to 269 (SFGNGVGSLNPPPPASPSANVTQDWEKFD) are disordered.

As to quaternary structure, binds to the ATPase domain of HSP70/HSC70 chaperones. Interacts with HSP70-1. In terms of tissue distribution, detected in stems, leaves, flowers and roots.

In terms of biological role, co-chaperone that regulates diverse cellular pathways, such as programmed cell death and stress responses. The chain is BAG family molecular chaperone regulator 4 (BAG4) from Arabidopsis thaliana (Mouse-ear cress).